A 174-amino-acid chain; its full sequence is MKILITGRPGVGKTTLIKKLSRLLQNAGGFYTEEMREGEKRIGFKIITLDGEEGILARTDLPSPYRVGKYYVNLKDLEEIGVRSLERAFQEKDLIIVDEIGKMELLSRKFREVVEKIFDSEKDVIATIKKSSDPFVEKIKNRNDVVIFELNEKNRNSLLNEILSVLKFNRGEKQ.

Residues 7–14 and 94–101 each bind ATP; these read GRPGVGKT and LIIVDEIG.

This sequence belongs to the THEP1 NTPase family.

It catalyses the reaction a ribonucleoside 5'-triphosphate + H2O = a ribonucleoside 5'-diphosphate + phosphate + H(+). In terms of biological role, has nucleotide phosphatase activity towards ATP, GTP, CTP, TTP and UTP. May hydrolyze nucleoside diphosphates with lower efficiency. This Thermotoga maritima (strain ATCC 43589 / DSM 3109 / JCM 10099 / NBRC 100826 / MSB8) protein is Nucleoside-triphosphatase THEP1.